We begin with the raw amino-acid sequence, 603 residues long: DNA mismatch repair protein MutL (603 aa).

The segment covering 337–347 has biased composition (basic and acidic residues); the sequence is ISKKQKEDQKS. The disordered stretch occupies residues 337–383; that stretch reads ISKKQKEDQKSEQIQMSFEENKPVKETPTLFSKPTIPEYVPSDEDAP.

It belongs to the DNA mismatch repair MutL/HexB family.

This protein is involved in the repair of mismatches in DNA. It is required for dam-dependent methyl-directed DNA mismatch repair. May act as a 'molecular matchmaker', a protein that promotes the formation of a stable complex between two or more DNA-binding proteins in an ATP-dependent manner without itself being part of a final effector complex. The protein is DNA mismatch repair protein MutL of Listeria monocytogenes serotype 4b (strain F2365).